Reading from the N-terminus, the 2646-residue chain is Probable inactive serine/threonine-protein kinase roco10 (2646 aa).

Disordered regions lie at residues 28-122 (LNYS…LSGG), 138-168 (NIPIPPVPTSPTSTPPNLQTNNNNKQDKDKD), 205-248 (PLFI…VSPS), 281-457 (QQQR…VKQA), 477-516 (MSKLVSQSKEQYKTPSSPYQQSTSSSISSGSGTISGHTSP), 605-656 (TSPN…PHQY), and 882-907 (QSSSSSSSSSISNSSSASSSSSSTPS). Residues 46–56 (PQQNLLENDTL) show a composition bias toward polar residues. 3 stretches are compositionally biased toward low complexity: residues 78-115 (IITTTTTTTTTTAMSPVATTTTSSPTISASPTYITSPS), 147-161 (SPTSTPPNLQTNNNN), and 215-228 (SRNNNGKRNSGGNK). A compositionally biased stretch (polar residues) spans 235–248 (KISSTSAAGDVSPS). Low complexity-rich tracts occupy residues 285–297 (NGNNNNNNNNNNN) and 325–334 (NNNNNNNNNN). A compositionally biased stretch (polar residues) spans 335–345 (KQPQHPMNGNH). Positions 346 to 394 (SPSNGTSGSLSMSGSGIDNGGNNNNNSNTHGSSSNQSSGVTSPIIQSTS) are enriched in low complexity. 2 stretches are compositionally biased toward polar residues: residues 402 to 416 (GLNSDSQMPLSSSPT) and 428 to 443 (TSASAVSSQNRSPLMN). 5 stretches are compositionally biased toward low complexity: residues 444–454 (STGVSSSSSGV), 491–516 (PSSPYQQSTSSSISSGSGTISGHTSP), 605–627 (TSPNLSSSLSSSSSSGSSGNSSP), 634–651 (QQQQQPQPTTTTTTNTNT), and 883–907 (SSSSSSSSSISNSSSASSSSSSTPS). The region spanning 585–807 (SSISPISTAA…MFIQQADILF (223 aa)) is the Rho-GAP domain. LRR repeat units lie at residues 968–987 (QKLDMFSLELESLPNEIKQL), 989–1011 (DLQELNLNRNKFKLLPGDLARLT), 1012–1033 (SLRTICIEENNLTEISSEMADF), 1040–1061 (NLENVTLSSNRLVVLPPLYTWL), 1062–1083 (KLKTLNISNNYLTKLPIDIFQI), 1085–1108 (TLEVLRVSNNDLDDNGIPKICTST), 1109–1131 (KLRSLDLRKNHLTSIPEGIINLV), 1132–1154 (ELQVLTLADNQISHLTSDIQKLT), 1155–1176 (SLTELNLNGNQIQSLPPQLLLL), 1178–1199 (NLKKLYLDNNQLQSISSAIHRM), 1201–1222 (SLIELRLTNNNISRLPPGIVAL), 1224–1247 (KLNSLELTGNKPLKDNIPEKYIQK), 1248–1270 (GKEGIFSFFSETMRTNVPCYRTR), 1271–1298 (IIMLGDKSTGKSNLIKCLKKLPKSSFSS), and 1303–1327 (LPSLNNLNSNNSNNSGNSKTNILDI). Residues 1262–1474 (TNVPCYRTRI…RDIKQMIAKN (213 aa)) enclose the Roc domain. Disordered stretches follow at residues 1293-1317 (KSSFSSSSSNLPSLNNLNSNNSNNS), 1651-1670 (NNNNSNGNNVGRGRSGSRSM), and 1957-2026 (NNSS…KEKE). The span at 1651 to 1669 (NNNNSNGNNVGRGRSGSRS) shows a compositional bias: low complexity. The span at 1966 to 1975 (PIASSRSNPK) shows a compositional bias: polar residues. Residues 1983-1996 (NLIQSNNNDNNNSL) show a composition bias toward low complexity. Residues 1997–2026 (SKKDLKELAKQNKEKEKEKEKDKDKEKEKE) are compositionally biased toward basic and acidic residues. Positions 2049–2342 (FSICHFIKEI…PSKIISQLYT (294 aa)) constitute a Protein kinase domain. Residues 2055–2063 (IKEIDYREI) and lysine 2094 contribute to the ATP site. Residues 2412 to 2536 (MVVLNNKQST…FTVPTTNKNG (125 aa)) enclose the RGS domain.

This sequence belongs to the protein kinase superfamily. TKL Ser/Thr protein kinase family. ROCO subfamily.

The sequence is that of Probable inactive serine/threonine-protein kinase roco10 (roco10) from Dictyostelium discoideum (Social amoeba).